Reading from the N-terminus, the 672-residue chain is DNA ligase (672 aa).

NAD(+) is bound by residues 35–39 (DAQYD), 84–85 (SL), and Glu-115. Lys-117 acts as the N6-AMP-lysine intermediate in catalysis. NAD(+) contacts are provided by Arg-138, Glu-178, Lys-294, and Lys-318. 4 residues coordinate Zn(2+): Cys-412, Cys-415, Cys-430, and Cys-435. In terms of domain architecture, BRCT spans 592–672 (ATGGPFVGKS…AFLQMLQTNA (81 aa)).

It belongs to the NAD-dependent DNA ligase family. LigA subfamily. Requires Mg(2+) as cofactor. Mn(2+) is required as a cofactor.

The enzyme catalyses NAD(+) + (deoxyribonucleotide)n-3'-hydroxyl + 5'-phospho-(deoxyribonucleotide)m = (deoxyribonucleotide)n+m + AMP + beta-nicotinamide D-nucleotide.. In terms of biological role, DNA ligase that catalyzes the formation of phosphodiester linkages between 5'-phosphoryl and 3'-hydroxyl groups in double-stranded DNA using NAD as a coenzyme and as the energy source for the reaction. It is essential for DNA replication and repair of damaged DNA. The protein is DNA ligase of Myxococcus xanthus (strain DK1622).